Here is a 170-residue protein sequence, read N- to C-terminus: Urease accessory protein UreE (170 aa).

This sequence belongs to the UreE family.

It localises to the cytoplasm. Involved in urease metallocenter assembly. Binds nickel. Probably functions as a nickel donor during metallocenter assembly. This Helicobacter pylori (strain ATCC 700392 / 26695) (Campylobacter pylori) protein is Urease accessory protein UreE.